Here is a 248-residue protein sequence, read N- to C-terminus: ATP synthase subunit a, chloroplastic (248 aa).

4 helical membrane passes run 96–116 (VPFI…GALL), 135–155 (INTT…AGLY), 200–220 (LVVA…MMLL), and 221–241 (GLFT…AYIG).

This sequence belongs to the ATPase A chain family. As to quaternary structure, F-type ATPases have 2 components, CF(1) - the catalytic core - and CF(0) - the membrane proton channel. CF(1) has five subunits: alpha(3), beta(3), gamma(1), delta(1), epsilon(1). CF(0) has four main subunits: a, b, b' and c.

The protein resides in the plastid. It is found in the chloroplast thylakoid membrane. Functionally, key component of the proton channel; it plays a direct role in the translocation of protons across the membrane. This is ATP synthase subunit a, chloroplastic from Adiantum capillus-veneris (Maidenhair fern).